A 96-amino-acid polypeptide reads, in one-letter code: UPF0235 protein ESA_00387 (96 aa).

Belongs to the UPF0235 family.

The polypeptide is UPF0235 protein ESA_00387 (Cronobacter sakazakii (strain ATCC BAA-894) (Enterobacter sakazakii)).